The following is a 357-amino-acid chain: Putative minor fimbrial subunit PmfE (357 aa).

Positions 1-28 are cleaved as a signal peptide; sequence MILNKKNIHSKSVMLFCAGIVSLMPLHA.

It localises to the fimbrium. The polypeptide is Putative minor fimbrial subunit PmfE (pmfE) (Proteus mirabilis (strain HI4320)).